A 562-amino-acid polypeptide reads, in one-letter code: Phosphopantothenoylcysteine decarboxylase subunit SIS2 (562 aa).

The segment covering 1-10 (MTAVASTSGK) has biased composition (polar residues). Disordered stretches follow at residues 1-63 (MTAV…SNAT), 97-165 (FSDL…KDYD), and 490-562 (GYPK…DKHQ). Residues 27-42 (GQKEILLDHEDAKGKD) show a composition bias toward basic and acidic residues. 2 stretches are compositionally biased toward polar residues: residues 44-63 (IINS…SNAT) and 99-113 (DLKQ…TQLK). 4 positions are modified to phosphoserine: serine 47, serine 50, serine 54, and serine 56. A compositionally biased stretch (low complexity) spans 121-134 (SPNSNPAPVSNSIP). Residues 142–156 (NHTNTSRTTQLSGSP) show a composition bias toward polar residues. Residue serine 155 is modified to Phosphoserine. A compositionally biased stretch (acidic residues) spans 496–553 (EEEDDDEDEEEDDDEEEDTEDKNENNNDDDDDDDDDDDDDDDDDDDDDDDDEDEDEAE).

The protein belongs to the HFCD (homooligomeric flavin containing Cys decarboxylase) superfamily. As to quaternary structure, interacts with the C-terminal domain of PPZ1. Component of the phosphopantothenoylcysteine decarboxylase (PPCDC) complex, a heterotrimer composed of CAB3, SIS2 and VHS3.

The protein localises to the nucleus. It localises to the cytoplasm. Component of the phosphopantothenoylcysteine decarboxylase (PPCDC) involved in the coenzyme A synthesis. Acts as an inhibitory subunit of protein phosphatase PPZ1, which is involved in many cellular processes such as G1-S transition or salt tolerance. Also modulates the expression of the ENA1 ATPase. The protein is Phosphopantothenoylcysteine decarboxylase subunit SIS2 (SIS2) of Saccharomyces cerevisiae (strain ATCC 204508 / S288c) (Baker's yeast).